The sequence spans 183 residues: Probable RNA 2'-phosphotransferase (183 aa).

Belongs to the KptA/TPT1 family.

In terms of biological role, removes the 2'-phosphate from RNA via an intermediate in which the phosphate is ADP-ribosylated by NAD followed by a presumed transesterification to release the RNA and generate ADP-ribose 1''-2''-cyclic phosphate (APPR&gt;P). May function as an ADP-ribosylase. In Pyrococcus furiosus (strain ATCC 43587 / DSM 3638 / JCM 8422 / Vc1), this protein is Probable RNA 2'-phosphotransferase.